The chain runs to 429 residues: Probable exoglucanase GH6D (429 aa).

Positions 1-17 (MRAVYAILAGLLATGSA) are cleaved as a signal peptide. Trp-75 and Ser-77 together coordinate substrate. Active-site proton donor residues include Asp-115 and Asp-162. 2 residues coordinate substrate: Asn-206 and Trp-209. N-linked (GlcNAc...) asparagine glycosylation occurs at Asn-237. Residues Asn-240, Trp-300, Lys-328, and Glu-332 each coordinate substrate. Residues 240–261 (NYNPYSTNNPPPYTAGSPSADE) form a disordered region. The interval 362–390 (PEIRADGGGGGSPAPGPSSTAVAPSPSAT) is disordered. Over residues 378-390 (PSSTAVAPSPSAT) the composition is skewed to low complexity. In terms of domain architecture, CBM1 spans 394–429 (NCAARWAQCGGQGWTGPTCCAQGTCQASNQWYSQCL).

The protein belongs to the glycosyl hydrolase 6 (cellulase B) family.

The protein resides in the secreted. In terms of biological role, probable exoglucanase that may play an important function in biomass degradation by catalyzing the hydrolysis of cellulose. The polypeptide is Probable exoglucanase GH6D (Podospora anserina (strain S / ATCC MYA-4624 / DSM 980 / FGSC 10383) (Pleurage anserina)).